Reading from the N-terminus, the 451-residue chain is Phosphoglucosamine mutase (451 aa).

Ser-101 serves as the catalytic Phosphoserine intermediate. The Mg(2+) site is built by Ser-101, Asp-240, Asp-242, and Asp-244. Ser-101 carries the phosphoserine modification.

It belongs to the phosphohexose mutase family. It depends on Mg(2+) as a cofactor. In terms of processing, activated by phosphorylation.

It catalyses the reaction alpha-D-glucosamine 1-phosphate = D-glucosamine 6-phosphate. Its function is as follows. Catalyzes the conversion of glucosamine-6-phosphate to glucosamine-1-phosphate. The sequence is that of Phosphoglucosamine mutase from Streptococcus pyogenes serotype M12 (strain MGAS2096).